The following is a 784-amino-acid chain: MNLSLCIASPLLTKSSRPTALSAIHTASTSHGGQTNPTNLIIDTTKERIQKLFKNVEISVSSYDTAWVAMVPSPNSPKSPCFPECLNWLINNQLNDGSWGLVNHTHNHNHPLLKDSLSSTLACIVALKRWNVGEDQINKGLSFIESNLASATDKSQPSPIGFDIIFPGLLEYAKNLDINLLSKQTDFSLMLHKRELEQKRCHSNEIDGYLAYISEGLGNLYDWNMVKKYQMKNGSVFNSPSATAAAFINHQNPGCLNYLNSLLDKFGNAVPTVYPLDLYIRLSMVDTIERLGISHHFRVEIKNVLDETYRCWVERDEQIFMDVVTCALAFRLLRIHGYKVSPDQLAEITNELAFKDEYAALETYHASQILYQEDLSSGKQILKSADFLKGILSTDSNRLSKLIHKEVENALKFPINTGLERINTRRNIQLYNVDNTRILKTTYHSSNISNTYYLRLAVEDFYTCQSIYREELKGLERWVVQNKLDQLKFARQKTAYCYFSVAATLSSPELSDARISWAKNGILTTVVDDFFDIGGTIDELTNLIQCVEKWNVDVDKDCCSEHVRILFLALKDAICWIGDEAFKWQARDVTSHVIQTWLELMNSMLREAIWTRDAYVPTLNEYMENAYVSFALGPIVKPAIYFVGPKLSEEIVESSEYHNLFKLMSTQGRLLNDIHSFKREFKEGKLNAVALHLSNGESGKVEEEVVEEMMMMIKNKRKELMKLIFEENGSIVPRACKDAFWNMCHVLNFFYANDDGFTGNTILDTVKDIIYNPLVLVNENEEQR.

Residues 1–28 (MNLSLCIASPLLTKSSRPTALSAIHTAS) constitute a chloroplast transit peptide. Aspartate 528, aspartate 532, asparagine 672, and glutamate 680 together coordinate Mg(2+). The DDXXD motif motif lies at 528–532 (DDFFD).

The protein belongs to the terpene synthase family. Mg(2+) serves as cofactor. As to expression, accumulates in leaves.

Its subcellular location is the plastid. The protein resides in the chloroplast. The catalysed reaction is ent-copalyl diphosphate = ent-kaur-16-ene + diphosphate. It participates in secondary metabolite biosynthesis; terpenoid biosynthesis. The protein operates within plant hormone biosynthesis; gibberellin biosynthesis. Functionally, involved in the biosynthesis of ent-kaurene diterpenoids natural products such as oridonin, miltiradiene, eriocalyxin B and nezukol, known to exhibit antitumor, anti-inflammatory and antibacterial activities, and in the production of gibberellins phytohormones. Catalyzes the conversion of ent-copalyl diphosphate (ent-CPP) to ent-kaurene. The sequence is that of Ent-kaurene synthase 1, chloroplastic from Stevia rebaudiana (Stevia).